A 374-amino-acid polypeptide reads, in one-letter code: 5-pentadecatrienyl resorcinol O-methyltransferase (374 aa).

S-adenosyl-L-methionine contacts are provided by aspartate 239, aspartate 261, methionine 262, and lysine 275. Catalysis depends on histidine 279, which acts as the Proton acceptor.

Belongs to the class I-like SAM-binding methyltransferase superfamily. Cation-independent O-methyltransferase family. COMT subfamily. As to quaternary structure, homodimer. As to expression, expressed predominantly in root hairs.

It catalyses the reaction (8Z,11Z)-5-(pentadeca-8,11,14-trien-1-yl)resorcinol + S-adenosyl-L-methionine = (8Z,11Z)-5-(pentadeca- 8,11,14-trien-1-yl)resorcinol-3-methyl ether + S-adenosyl-L-homocysteine + H(+). In terms of biological role, O-methyltransferase involved in the biosynthetic pathway of the phytotoxin sorgoleone, a potent broad-spectrum inhibitor active against many agronomically important monocot and dicot weed species. Substrate specificity for alkylresorcinols. Strong preference for a five carbons alkyl side chain. The polypeptide is 5-pentadecatrienyl resorcinol O-methyltransferase (OMT3) (Sorghum bicolor (Sorghum)).